The primary structure comprises 239 residues: Splicing factor U2AF 35 kDa subunit (239 aa).

Alanine 2 is subject to N-acetylalanine. The C3H1-type 1 zinc-finger motif lies at 12–40; that stretch reads EKDKVNCSFYFKIGACRHGDRCSRLHNKP. Lysine 39 carries the post-translational modification N6-methyllysine. Serine 61 and serine 145 each carry phosphoserine. Residues 65–147 enclose the RRM domain; it reads LRCAVSDVEM…QPIHAELSPV (83 aa). The segment at 149 to 176 adopts a C3H1-type 2 zinc-finger fold; it reads DFREACCRQYEMGECTRGGFCNFMHLKP. Arginine 165 bears the Omega-N-methylarginine mark. Positions 183 to 239 are disordered; the sequence is RELYGRRRKKHRSRSRSRERRSRSRDRGRGGGGGGGGGGGRERDRRRSRDRERSGRF. Basic residues predominate over residues 188–208; that stretch reads RRRKKHRSRSRSRERRSRSRD. Over residues 212–221 the composition is skewed to gly residues; that stretch reads GGGGGGGGGG. The span at 222–239 shows a compositional bias: basic and acidic residues; that stretch reads GRERDRRRSRDRERSGRF.

Belongs to the splicing factor SR family. As to quaternary structure, identified in the spliceosome C complex. Heterodimer with U2AF2. Interacts (via RS domain) with PHF5A (via N-terminus). Interacts with ZRANB2. Interacts with SDE2. Interacts with SF3B1. In terms of tissue distribution, expressed in primary spermatocytes and elongating spermatids (at protein level).

The protein resides in the nucleus. It localises to the nucleus speckle. Its function is as follows. Plays a critical role in both constitutive and enhancer-dependent splicing by mediating protein-protein interactions and protein-RNA interactions required for accurate 3'-splice site selection. Recruits U2 snRNP to the branch point. Directly mediates interactions between U2AF2 and proteins bound to the enhancers and thus may function as a bridge between U2AF2 and the enhancer complex to recruit it to the adjacent intron. The polypeptide is Splicing factor U2AF 35 kDa subunit (U2af1) (Mus musculus (Mouse)).